Consider the following 143-residue polypeptide: Ribonuclease P protein component 2 (143 aa).

Belongs to the eukaryotic/archaeal RNase P protein component 2 family. Consists of a catalytic RNA component and at least 4-5 protein subunits.

It is found in the cytoplasm. It catalyses the reaction Endonucleolytic cleavage of RNA, removing 5'-extranucleotides from tRNA precursor.. Part of ribonuclease P, a protein complex that generates mature tRNA molecules by cleaving their 5'-ends. The protein is Ribonuclease P protein component 2 of Saccharolobus islandicus (strain L.S.2.15 / Lassen #1) (Sulfolobus islandicus).